We begin with the raw amino-acid sequence, 482 residues long: Cytochrome c-552 (482 aa).

The N-terminal stretch at 1-26 (MIKVSNALQRILIGAALALFGGGAQA) is a signal peptide. Heme c is bound at residue histidine 98. Heme-binding residues include cysteine 126, cysteine 129, and lysine 130. Heme c-binding residues include cysteine 164, cysteine 167, histidine 168, cysteine 213, cysteine 216, and histidine 217. Glutamate 219, tyrosine 220, lysine 265, and glutamine 267 together coordinate Ca(2+). Residue tyrosine 220 coordinates substrate. Histidine 268 serves as a coordination point for substrate. Heme c is bound by residues histidine 279, cysteine 286, cysteine 289, histidine 290, histidine 305, cysteine 318, cysteine 321, histidine 322, and histidine 397.

Belongs to the cytochrome c-552 family. It depends on Ca(2+) as a cofactor. Requires heme c as cofactor.

The protein localises to the periplasm. It carries out the reaction 6 Fe(III)-[cytochrome c] + NH4(+) + 2 H2O = 6 Fe(II)-[cytochrome c] + nitrite + 8 H(+). It participates in nitrogen metabolism; nitrate reduction (assimilation). In terms of biological role, catalyzes the reduction of nitrite to ammonia, consuming six electrons in the process. This chain is Cytochrome c-552, found in Edwardsiella ictaluri (strain 93-146).